We begin with the raw amino-acid sequence, 612 residues long: Proline-rich protein 14 (612 aa).

N-acetylmethionine is present on Met1. 2 stretches are compositionally biased toward polar residues: residues 1–15 and 86–96; these read MDLP…QPSL and VCTQSPALPSQ. Disordered stretches follow at residues 1 to 48, 65 to 96, 119 to 150, and 206 to 256; these read MDLP…EKAS, VPLT…LPSQ, RARQ…QVPQ, and PTLT…PALE. A sufficient for heterochromatin association in interphase and chromatin association in anaphase region spans residues 1 to 135; that stretch reads MDLPGNSSPF…ALRMRSRAAS (135 aa). Residues 85–405 are required for the interaction with GRB2 and sufficient to promote the phosphorylation of AKT and cell proliferation; it reads PVCTQSPALP…MARTPPPPRP (321 aa). The interval 136 to 392 is required for nuclear lamina association; the sequence is GPEESPSKKT…QSRPRRHTVG (257 aa). Over residues 243–252 the composition is skewed to pro residues; sequence ADPPESPVPD. A Phosphoserine modification is found at Ser307. Disordered regions lie at residues 323–405, 444–463, and 553–583; these read QSRA…PPRP, LGST…FSDP, and DSSL…PSQD. Positions 342–359 are enriched in polar residues; that stretch reads WRTQCNSLAPVSKSSLGR. Residues 366–379 show a composition bias toward pro residues; that stretch reads LGPPDPGSWPPVPS. Over residues 448-463 the composition is skewed to basic and acidic residues; it reads KGKELRASKDKVFSDP. The segment at 546–563 is required for nuclear localization; sequence RRAVEFRDSSLPRSRRPS. The span at 570–583 shows a compositional bias: polar residues; the sequence is ASRTLTPNLAPSQD.

As to quaternary structure, interacts (via proline-rich region) with GRB2 (via SH3 domain 2). Interacts (via N-terminus) with CBX5.

Its subcellular location is the chromosome. It localises to the nucleus. It is found in the nucleus lamina. The protein localises to the nucleoplasm. In terms of biological role, functions in tethering peripheral heterochromatin to the nuclear lamina during interphase, possibly through the interaction with heterochromatin protein CBX5/HP1 alpha. Might play a role in reattaching heterochromatin to the nuclear lamina at mitotic exit. Promotes myoblast differentiation during skeletal myogenesis, possibly by stimulating transcription factor MyoD activity via binding to CBX5/HP1 alpha. Involved in the positive regulation of the PI3K-Akt-mTOR signaling pathway and in promoting cell proliferation, possibly via binding to GRB2. The protein is Proline-rich protein 14 (Prr14) of Mus musculus (Mouse).